Reading from the N-terminus, the 483-residue chain is Leukocyte immunoglobulin-like receptor subfamily A member 2 (483 aa).

An N-terminal signal peptide occupies residues 1-23 (MTPILTVLICLGLSLGPRTHVQA). The Extracellular segment spans residues 24–449 (GHLPKPTLWA…QHPQDYTVEN (426 aa)). Ig-like C2-type domains lie at 27 to 113 (PKPT…DPLE), 117 to 222 (TGAY…GVSK), 224 to 313 (PSLS…DPLD), and 324 to 413 (PSLS…SDPL). An intrachain disulfide couples Cys-49 to Cys-97. N-linked (GlcNAc...) asparagine glycosylation is found at Asn-64, Asn-103, and Asn-138. 2 cysteine pairs are disulfide-bonded: Cys-143–Cys-195 and Cys-244–Cys-295. N-linked (GlcNAc...) asparagine glycosylation is found at Asn-279, Asn-300, and Asn-339. The cysteines at positions 344 and 395 are disulfide-linked. A 3'-nitrotyrosine modification is found at Tyr-404. Asn-429 carries N-linked (GlcNAc...) asparagine glycosylation. Residues 450–470 (LIRMGVAGLVLVVLGILLFEA) traverse the membrane as a helical segment. The Cytoplasmic segment spans residues 471-483 (QHSQRSLQDAAGR).

As to quaternary structure, homodimer. In terms of tissue distribution, detected on the surface of all peripheral blood monocytes, neutrophils, basophils and eosinophils (at protein level). Expression levels are very low or not detectable on monocytes, T-cells, B-cells, dendritic cells and natural killer (NK) cells.

It localises to the cell membrane. Its subcellular location is the secreted. Its function is as follows. Part of the innate immune responses against microbial infection. Specifically recognizes a set of N-terminally truncated immunoglobulins that are produced via cleavage by proteases from a range of pathogenic bacteria and fungi, including L.pneumophila, M.hyorhinis, S.pneumoniae, S.aureus and C.albicans. Recognizes epitopes that are in part in the variable region of the immunoglobulin light chains, but requires also the constant region for signaling. Binds to a subset of cleaved IgM, IgG3 and IgG4 molecules, but does not bind cleaved IgA1. Binding of N-terminally truncated immunoglobulins mediates activation of neutrophils. In monocytes, activation leads to the release of CSF2, CF3, IL6, CXCL8 and CCL3 and down-regulates responses to bacterial lipopolysaccharide (LPS), possibly via down-regulation of TLR4 expression and reduced signaling via TLR4. In eosinophils, activation by ligand binding leads to the release of RNASE2, IL4 and leukotriene C4. Does not bind class I MHC antigens. This Homo sapiens (Human) protein is Leukocyte immunoglobulin-like receptor subfamily A member 2 (LILRA2).